The chain runs to 300 residues: Porphobilinogen deaminase (300 aa).

C242 is subject to S-(dipyrrolylmethanemethyl)cysteine.

The protein belongs to the HMBS family. As to quaternary structure, monomer. It depends on dipyrromethane as a cofactor.

It catalyses the reaction 4 porphobilinogen + H2O = hydroxymethylbilane + 4 NH4(+). It functions in the pathway porphyrin-containing compound metabolism; protoporphyrin-IX biosynthesis; coproporphyrinogen-III from 5-aminolevulinate: step 2/4. Tetrapolymerization of the monopyrrole PBG into the hydroxymethylbilane pre-uroporphyrinogen in several discrete steps. The sequence is that of Porphobilinogen deaminase from Blochmanniella pennsylvanica (strain BPEN).